The following is a 124-amino-acid chain: Large ribosomal subunit protein bL17 (124 aa).

The protein belongs to the bacterial ribosomal protein bL17 family. In terms of assembly, part of the 50S ribosomal subunit. Contacts protein L32.

The sequence is that of Large ribosomal subunit protein bL17 from Trichlorobacter lovleyi (strain ATCC BAA-1151 / DSM 17278 / SZ) (Geobacter lovleyi).